Reading from the N-terminus, the 418-residue chain is Pyruvate kinase isozyme G, chloroplastic (418 aa).

Residues Asp14 and Thr15 each contribute to the K(+) site. Position 21 (Arg21) interacts with ATP. Position 165 (Glu165) interacts with Mg(2+). Substrate contacts are provided by Gly188, Asp189, and Thr221. Position 189 (Asp189) interacts with Mg(2+).

Belongs to the pyruvate kinase family. Mg(2+) serves as cofactor. K(+) is required as a cofactor. As to expression, expressed in developing and germinating endosperm and in roots.

Its subcellular location is the plastid. The protein localises to the chloroplast. The enzyme catalyses pyruvate + ATP = phosphoenolpyruvate + ADP + H(+). It participates in carbohydrate degradation; glycolysis; pyruvate from D-glyceraldehyde 3-phosphate: step 5/5. The chain is Pyruvate kinase isozyme G, chloroplastic from Ricinus communis (Castor bean).